The primary structure comprises 142 residues: Mini-ribonuclease 3 (142 aa).

D33 is an active-site residue.

Belongs to the MrnC RNase family. Homodimer. Requires Mg(2+) as cofactor.

It is found in the cytoplasm. Involved in correct processing of both the 5' and 3' ends of 23S rRNA precursor. Processes 30S rRNA precursor transcript even in absence of ribonuclease 3 (Rnc); Rnc processes 30S rRNA into smaller rRNA precursors. This chain is Mini-ribonuclease 3, found in Thermoanaerobacter sp. (strain X514).